Here is a 161-residue protein sequence, read N- to C-terminus: Endoribonuclease YbeY (161 aa).

3 residues coordinate Zn(2+): His-121, His-125, and His-131.

The protein belongs to the endoribonuclease YbeY family. Requires Zn(2+) as cofactor.

It is found in the cytoplasm. Functionally, single strand-specific metallo-endoribonuclease involved in late-stage 70S ribosome quality control and in maturation of the 3' terminus of the 16S rRNA. The polypeptide is Endoribonuclease YbeY (Xanthomonas euvesicatoria pv. vesicatoria (strain 85-10) (Xanthomonas campestris pv. vesicatoria)).